Here is a 168-residue protein sequence, read N- to C-terminus: Thiol peroxidase (168 aa).

In terms of domain architecture, Thioredoxin spans 19 to 168; sequence PQAGSKAQAF…YDAALNVLKA (150 aa). C61 serves as the catalytic Cysteine sulfenic acid (-SOH) intermediate. C61 and C95 are disulfide-bonded.

The protein belongs to the peroxiredoxin family. Tpx subfamily. As to quaternary structure, homodimer.

It carries out the reaction a hydroperoxide + [thioredoxin]-dithiol = an alcohol + [thioredoxin]-disulfide + H2O. In terms of biological role, thiol-specific peroxidase that catalyzes the reduction of hydrogen peroxide and organic hydroperoxides to water and alcohols, respectively. Plays a role in cell protection against oxidative stress by detoxifying peroxides. The protein is Thiol peroxidase of Salmonella typhi.